Here is a 188-residue protein sequence, read N- to C-terminus: Ribosome maturation factor RimM (188 aa).

Residues 96–169 (DDEFYYADLE…RILIDPMAAG (74 aa)) form the PRC barrel domain.

It belongs to the RimM family. Binds ribosomal protein uS19.

It is found in the cytoplasm. Its function is as follows. An accessory protein needed during the final step in the assembly of 30S ribosomal subunit, possibly for assembly of the head region. Essential for efficient processing of 16S rRNA. May be needed both before and after RbfA during the maturation of 16S rRNA. It has affinity for free ribosomal 30S subunits but not for 70S ribosomes. This Agrobacterium fabrum (strain C58 / ATCC 33970) (Agrobacterium tumefaciens (strain C58)) protein is Ribosome maturation factor RimM.